The sequence spans 58 residues: Large ribosomal subunit protein bL32c (58 aa).

The protein belongs to the bacterial ribosomal protein bL32 family.

Its subcellular location is the plastid. The protein localises to the chloroplast. In Adiantum capillus-veneris (Maidenhair fern), this protein is Large ribosomal subunit protein bL32c (rpl32).